A 115-amino-acid chain; its full sequence is Large ribosomal subunit protein bL19 (115 aa).

Belongs to the bacterial ribosomal protein bL19 family.

Its function is as follows. This protein is located at the 30S-50S ribosomal subunit interface and may play a role in the structure and function of the aminoacyl-tRNA binding site. The sequence is that of Large ribosomal subunit protein bL19 from Baumannia cicadellinicola subsp. Homalodisca coagulata.